A 130-amino-acid chain; its full sequence is Cuticle protein 14 isoform b (130 aa).

The Chitin-binding type R&amp;R domain occupies 24-90; that stretch reads IGNYNFGYNE…NVHTNEPGTD (67 aa).

The polypeptide is Cuticle protein 14 isoform b (Limulus polyphemus (Atlantic horseshoe crab)).